The following is a 968-amino-acid chain: Sorting nexin-13 (968 aa).

The PXA domain maps to 97 to 284; the sequence is ANIIDEPLQQ…YVIWMIRDSN (188 aa). The RGS domain occupies 373–496; that stretch reads PLDSILVDNV…RKVYELMLRD (124 aa). One can recognise a PX domain in the interval 570–691; that stretch reads YADYDPYAVA…DFLENKAYSK (122 aa). Positions 612, 614, 639, and 653 each coordinate a 1,2-diacyl-sn-glycero-3-phospho-(1D-myo-inositol-3-phosphate).

This sequence belongs to the sorting nexin family.

It localises to the early endosome membrane. In terms of biological role, may be involved in several stages of intracellular trafficking. May play a role in endosome homeostasis. Acts as a GAP for Galphas. This Homo sapiens (Human) protein is Sorting nexin-13 (SNX13).